The sequence spans 1435 residues: MMQGNKKCTDAFSDSSSIGSVLDDADREVSSLTDRAFRSLCISEDTSFHDSYLAVSPDITRQVFGTFHQRTVGHTQRKSGIWSQLPSQGTEHSGWAATFQQLPKYVQGEEKYPKTSPPPTPVQRRLEVPVSGLRSSNKPVSKVSTLIKSFDRTESQRCESRPTASKPPALKNPPKFAPLPENSVNFCFDSAFLTVRRVPAEVSNTHQNSYQPGRKHGEQESSKNPEMACHGSSSFLPAANDTATLCESKFPSPHHKPVTGEPGRGKGTFLHSENSAFESWNAHQPKLLERKDTAGTVPESKAPKHYGDTTLLREPCPPERTVSPCQVQASCSQEENRLAAGALSTSIPWGCRDPGAQVFAVEGKAPSSQPDSQEKPAQPPWRKPKTGKKGKESLQDTLEEKTQTNQRGPPLYTKHNPQEQFSENNALDLPVEPNEHYDPPFNISKLLTPIIPSKHALDSADSQPAERTPSPPGQLNGYQEKEPSECQSRDSYKSKAPSLLFNLKDVRKRVKSTYSSSPLLKVLDEKTRGKVDGKQEPVSNGVILPNGLEESPPNELSKERPADDPTASHINPQKDPTADPSEPSADSYLTLSTAPTIAKAPFYVNGEAAERSSYENKEVEGELEMGPAGSSWCPDSREHRPRKHLSLRLCNRDPEPGGATEKMKTHQLENGLSRSVSQETEPEREAGLQNTHLNQKFFPGPLSPEEEDVFYSDSQSDFMPSLKGKAKFSTSSSDQSFASFDDQQKMWFTENQREDRRKDVSAGDSQKDEKENVMRKDELQYCALSNGHACLENRSQGEALQRERESVSGGRTRKASAEEANFRGSWIGENKGTTFSQAKDLTPSPSSASNRHMLFTIKDNTLRATPVIKPIMLPLLRTMSLEDSLSSGHKEEELPRPEWGEDPGFCAPENQDILGTSTPTNTRGTRVKCMANEVMEDPGQGSSMARMEASQPAPKGNFPSMPLVGEGDRVKAPPDAAPGLVASNCKSGSADSGKLAAPWHIPTIALPEGDIEDQPPPWQPENCWEEQTPGFKSHFLSTPRAGPPGRRLVPSERANSPNPGSPGESSACSPAASNIWEESSQAPGGPELLPEEPNQASPWASSSPARVTRREDLTHALVWEGGSDPLLELSAEDLRTLSPRGSLLDVATSPAGTSGRLELPAQLERTASKPPAVPPKTEKALRRAKKLASKRRKTDQAQEKHGESQEGKPCPEDLEQTQQRPLCPRERPRHNFPVVRSLPPPVHRHSVSGFSEPVGRRPGGPQSLTPLPAYPATQKVLQDPQSGEYFVFDLPLQVKIKTFYDPETGKYVKVSIPSSEGASPEPPPPDALAAPYVLYPGFQPVPVTALMPLRCSSQLSAPTFLRQGPRASAARARTQSVHESGLQLDPGPHGDCTPHSAGQRPHGPPQSPGEEGVEAPGLGIISTDDLEDFATEGIS.

4 disordered regions span residues 109–176, 203–234, 250–270, and 291–311; these read EEKY…PPKF, SNTHQNSYQPGRKHGEQESSKNPEMACHGSSS, FPSPHHKPVTGEPGRGKGTFL, and KDTAGTVPESKAPKHYGDTTL. T120 is subject to Phosphothreonine. Residues 133–147 are compositionally biased toward polar residues; sequence LRSSNKPVSKVSTLI. Over residues 149 to 160 the composition is skewed to basic and acidic residues; the sequence is SFDRTESQRCES. At S323 the chain carries Phosphoserine. Disordered regions lie at residues 362 to 592, 609 to 772, 795 to 847, 1007 to 1108, 1138 to 1261, and 1363 to 1435; these read EGKA…LTLS, AERS…EKEN, SQGE…SPSS, PEGD…ARVT, SPRG…PGGP, and QGPR…EGIS. A compositionally biased stretch (basic and acidic residues) spans 389–402; sequence KGKESLQDTLEEKT. S470 is modified (phosphoserine). 4 stretches are compositionally biased toward basic and acidic residues: residues 479–493, 522–535, 609–620, and 650–667; these read QEKEPSECQSRDSYK, VLDEKTRGKVDGKQ, AERSSYENKEVE, and CNRDPEPGGATEKMKTHQ. A compositionally biased stretch (polar residues) spans 668–679; sequence LENGLSRSVSQE. The span at 727-741 shows a compositional bias: low complexity; it reads KFSTSSSDQSFASFD. Positions 751–772 are enriched in basic and acidic residues; the sequence is NQREDRRKDVSAGDSQKDEKEN. Position 816 is a phosphoserine (S816). Residues 831 to 847 are compositionally biased toward polar residues; sequence KGTTFSQAKDLTPSPSS. Residues 1055–1066 show a composition bias toward low complexity; that stretch reads NSPNPGSPGESS. A compositionally biased stretch (polar residues) spans 1067–1082; sequence ACSPAASNIWEESSQA. Low complexity predominate over residues 1083–1093; it reads PGGPELLPEEP. Residues 1094-1105 are compositionally biased toward polar residues; it reads NQASPWASSSPA. Positions 1182–1193 are enriched in basic residues; the sequence is RRAKKLASKRRK. A compositionally biased stretch (basic and acidic residues) spans 1194–1211; it reads TDQAQEKHGESQEGKPCP. The segment covering 1424–1435 has biased composition (acidic residues); that stretch reads DDLEDFATEGIS.

Interacts with FHL2. As to expression, expressed in the heart and skeletal muscle.

It is found in the cytoplasm. The protein localises to the myofibril. Its subcellular location is the sarcomere. It localises to the z line. Functionally, plays an important role in cardiomyocyte hypertrophy via activation of the calcineurin/NFAT signaling pathway. The polypeptide is Cardiac-enriched FHL2-interacting protein (Homo sapiens (Human)).